The chain runs to 355 residues: NADH-quinone oxidoreductase subunit H (355 aa).

Helical transmembrane passes span 25-45 (LVRILVVAVVILLCVAYLILW), 91-111 (WLYLVAPVMTVVPAFAVWAVI), 126-146 (LLYAMAISSIGVYAVILAGWA), 170-190 (MGFALVLVLMTAGSLNLSEIV), 205-225 (FLSWNWLPLLPAFVVYFVSGI), 253-273 (MAFALFFLAEYINMIVISALA), 290-310 (FIPGIFWLVLKVFALLSVFIW), and 330-350 (VFLPVTVIWVVVVGFWMMSPL).

The protein belongs to the complex I subunit 1 family. NDH-1 is composed of 14 different subunits. Subunits NuoA, H, J, K, L, M, N constitute the membrane sector of the complex.

Its subcellular location is the cell inner membrane. The enzyme catalyses a quinone + NADH + 5 H(+)(in) = a quinol + NAD(+) + 4 H(+)(out). Functionally, NDH-1 shuttles electrons from NADH, via FMN and iron-sulfur (Fe-S) centers, to quinones in the respiratory chain. The immediate electron acceptor for the enzyme in this species is believed to be ubiquinone. Couples the redox reaction to proton translocation (for every two electrons transferred, four hydrogen ions are translocated across the cytoplasmic membrane), and thus conserves the redox energy in a proton gradient. This subunit may bind ubiquinone. This Burkholderia vietnamiensis (strain G4 / LMG 22486) (Burkholderia cepacia (strain R1808)) protein is NADH-quinone oxidoreductase subunit H.